The following is a 314-amino-acid chain: Putative S-adenosyl-L-methionine-dependent methyltransferase MRA_3805 (314 aa).

S-adenosyl-L-methionine-binding positions include aspartate 132 and 161-162; that span reads DL.

The protein belongs to the UPF0677 family.

Functionally, exhibits S-adenosyl-L-methionine-dependent methyltransferase activity. The polypeptide is Putative S-adenosyl-L-methionine-dependent methyltransferase MRA_3805 (Mycobacterium tuberculosis (strain ATCC 25177 / H37Ra)).